An 809-amino-acid polypeptide reads, in one-letter code: Leucine--tRNA ligase (809 aa).

Residues 40 to 50 carry the 'HIGH' region motif; the sequence is PYPSGRIHMGH. Residues 579 to 583 carry the 'KMSKS' region motif; it reads KMSKS. Lysine 582 contacts ATP.

This sequence belongs to the class-I aminoacyl-tRNA synthetase family.

It is found in the cytoplasm. The catalysed reaction is tRNA(Leu) + L-leucine + ATP = L-leucyl-tRNA(Leu) + AMP + diphosphate. The protein is Leucine--tRNA ligase of Campylobacter jejuni subsp. doylei (strain ATCC BAA-1458 / RM4099 / 269.97).